Reading from the N-terminus, the 525-residue chain is GMP synthase [glutamine-hydrolyzing] (525 aa).

The Glutamine amidotransferase type-1 domain occupies 9 to 207 (RILILDFGSQ…VLDICRCTPL (199 aa)). C86 functions as the Nucleophile in the catalytic mechanism. Residues H181 and E183 contribute to the active site. The GMPS ATP-PPase domain maps to 208–400 (WTPAKIIEDA…LGLPYDMLYR (193 aa)). 235-241 (SGGVDSS) is a binding site for ATP.

As to quaternary structure, homodimer.

It carries out the reaction XMP + L-glutamine + ATP + H2O = GMP + L-glutamate + AMP + diphosphate + 2 H(+). The protein operates within purine metabolism; GMP biosynthesis; GMP from XMP (L-Gln route): step 1/1. Functionally, catalyzes the synthesis of GMP from XMP. This chain is GMP synthase [glutamine-hydrolyzing], found in Sodalis glossinidius (strain morsitans).